Reading from the N-terminus, the 97-residue chain is Large ribosomal subunit protein bL27 (97 aa).

The interval 1 to 21 (MAHKKGVGSSRNGRDSNPKYR) is disordered.

Belongs to the bacterial ribosomal protein bL27 family.

This chain is Large ribosomal subunit protein bL27, found in Gemmatimonas aurantiaca (strain DSM 14586 / JCM 11422 / NBRC 100505 / T-27).